A 310-amino-acid chain; its full sequence is Carbamate kinase (310 aa).

This sequence belongs to the carbamate kinase family.

It localises to the cytoplasm. The catalysed reaction is hydrogencarbonate + NH4(+) + ATP = carbamoyl phosphate + ADP + H2O + H(+). It participates in metabolic intermediate metabolism; carbamoyl phosphate degradation; CO(2) and NH(3) from carbamoyl phosphate: step 1/1. In Staphylococcus epidermidis (strain ATCC 35984 / DSM 28319 / BCRC 17069 / CCUG 31568 / BM 3577 / RP62A), this protein is Carbamate kinase (arcC).